We begin with the raw amino-acid sequence, 587 residues long: D-lactate dehydrogenase [cytochrome] 1, mitochondrial (587 aa).

The 182-residue stretch at 146 to 327 (SPEQRPRIIL…TEATVKCHVK (182 aa)) folds into the FAD-binding PCMH-type domain.

The protein belongs to the FAD-binding oxidoreductase/transferase type 4 family. FAD serves as cofactor.

The protein resides in the mitochondrion inner membrane. It carries out the reaction (R)-lactate + 2 Fe(III)-[cytochrome c] = 2 Fe(II)-[cytochrome c] + pyruvate + 2 H(+). Functionally, catalyzes the stereospecific oxidation of D-lactate to pyruvate. The protein is D-lactate dehydrogenase [cytochrome] 1, mitochondrial of Saccharomyces cerevisiae (strain ATCC 204508 / S288c) (Baker's yeast).